The chain runs to 119 residues: Large ribosomal subunit protein uL18 (119 aa).

Belongs to the universal ribosomal protein uL18 family. As to quaternary structure, part of the 50S ribosomal subunit; part of the 5S rRNA/L5/L18/L25 subcomplex. Contacts the 5S and 23S rRNAs.

Its function is as follows. This is one of the proteins that bind and probably mediate the attachment of the 5S RNA into the large ribosomal subunit, where it forms part of the central protuberance. The chain is Large ribosomal subunit protein uL18 from Oceanobacillus iheyensis (strain DSM 14371 / CIP 107618 / JCM 11309 / KCTC 3954 / HTE831).